We begin with the raw amino-acid sequence, 159 residues long: Phosphopantetheine adenylyltransferase (159 aa).

T10 contributes to the substrate binding site. Residues 10–11 (TF) and H18 contribute to the ATP site. Residues K42, M74, and R88 each contribute to the substrate site. Residues 89 to 91 (GLR), E99, and 124 to 130 (WSFISSS) each bind ATP.

The protein belongs to the bacterial CoaD family. As to quaternary structure, homohexamer. The cofactor is Mg(2+).

Its subcellular location is the cytoplasm. The catalysed reaction is (R)-4'-phosphopantetheine + ATP + H(+) = 3'-dephospho-CoA + diphosphate. The protein operates within cofactor biosynthesis; coenzyme A biosynthesis; CoA from (R)-pantothenate: step 4/5. Functionally, reversibly transfers an adenylyl group from ATP to 4'-phosphopantetheine, yielding dephospho-CoA (dPCoA) and pyrophosphate. This is Phosphopantetheine adenylyltransferase from Shigella sonnei (strain Ss046).